Consider the following 500-residue polypeptide: Probable glycine dehydrogenase (decarboxylating) subunit 2 (500 aa).

Lys273 carries the post-translational modification N6-(pyridoxal phosphate)lysine.

The protein belongs to the GcvP family. C-terminal subunit subfamily. As to quaternary structure, the glycine cleavage system is composed of four proteins: P, T, L and H. In this organism, the P 'protein' is a heterodimer of two subunits. Pyridoxal 5'-phosphate serves as cofactor.

The catalysed reaction is N(6)-[(R)-lipoyl]-L-lysyl-[glycine-cleavage complex H protein] + glycine + H(+) = N(6)-[(R)-S(8)-aminomethyldihydrolipoyl]-L-lysyl-[glycine-cleavage complex H protein] + CO2. In terms of biological role, the glycine cleavage system catalyzes the degradation of glycine. The P protein binds the alpha-amino group of glycine through its pyridoxal phosphate cofactor; CO(2) is released and the remaining methylamine moiety is then transferred to the lipoamide cofactor of the H protein. The chain is Probable glycine dehydrogenase (decarboxylating) subunit 2 from Rhodopirellula baltica (strain DSM 10527 / NCIMB 13988 / SH1).